The primary structure comprises 297 residues: Light-independent protochlorophyllide reductase iron-sulfur ATP-binding protein (297 aa).

ATP contacts are provided by residues 41-46 (GIGKST) and Lys-70. Residue Ser-45 coordinates Mg(2+). Cys-126 and Cys-160 together coordinate [4Fe-4S] cluster. Residues 211-212 (NR) and 235-237 (PDL) contribute to the ATP site.

The protein belongs to the NifH/BchL/ChlL family. In terms of assembly, homodimer. Protochlorophyllide reductase is composed of three subunits; BchL, BchN and BchB. The cofactor is [4Fe-4S] cluster.

It catalyses the reaction chlorophyllide a + oxidized 2[4Fe-4S]-[ferredoxin] + 2 ADP + 2 phosphate = protochlorophyllide a + reduced 2[4Fe-4S]-[ferredoxin] + 2 ATP + 2 H2O. The protein operates within porphyrin-containing compound metabolism; bacteriochlorophyll biosynthesis (light-independent). In terms of biological role, component of the dark-operative protochlorophyllide reductase (DPOR) that uses Mg-ATP and reduced ferredoxin to reduce ring D of protochlorophyllide (Pchlide) to form chlorophyllide a (Chlide). This reaction is light-independent. The L component serves as a unique electron donor to the NB-component of the complex, and binds Mg-ATP. The sequence is that of Light-independent protochlorophyllide reductase iron-sulfur ATP-binding protein from Cereibacter sphaeroides (strain KD131 / KCTC 12085) (Rhodobacter sphaeroides).